Here is a 365-residue protein sequence, read N- to C-terminus: 3-galactosyl-N-acetylglucosaminide 4-alpha-L-fucosyltransferase FUT3 (365 aa).

Over M1–H15 the chain is Cytoplasmic. A helical; Signal-anchor for type II membrane protein membrane pass occupies residues C16 to L34. The Lumenal portion of the chain corresponds to R35–Q365. N-linked (GlcNAc...) asparagine glycosylation is found at N100, N158, and N189.

It belongs to the glycosyltransferase 10 family. Glycosylated. As to expression, liver, kidney, lung and brain.

It is found in the golgi apparatus. It localises to the golgi stack membrane. It carries out the reaction a beta-D-galactosyl-(1-&gt;3)-N-acetyl-beta-D-glucosaminyl derivative + GDP-beta-L-fucose = a beta-D-galactosyl-(1-&gt;3)-[alpha-L-fucosyl-(1-&gt;4)]-N-acetyl-beta-D-glucosaminyl derivative + GDP + H(+). The catalysed reaction is an N-acetyl-alpha-neuraminyl-(2-&gt;3)-beta-D-galactosyl-(1-&gt;4)-N-acetyl-beta-D-glucosaminyl derivative + GDP-beta-L-fucose = an alpha-Neu5Ac-(2-&gt;3)-beta-D-Gal-(1-&gt;4)-[alpha-L-Fuc-(1-&gt;3)]-beta-D-GlcNAc derivative + GDP + H(+). It catalyses the reaction a beta-D-galactosyl-(1-&gt;4)-N-acetyl-beta-D-glucosaminyl derivative + GDP-beta-L-fucose = a beta-D-galactosyl-(1-&gt;4)-[alpha-L-fucosyl-(1-&gt;3)]-N-acetyl-beta-D-glucosaminyl derivative + GDP + H(+). The enzyme catalyses an alpha-Neu5Ac-(2-&gt;3)-beta-D-Gal-(1-&gt;4)-beta-D-GlcNAc-(1-&gt;3)-beta-D-Gal-(1-&gt;4)-[alpha-L-Fuc-(1-&gt;3)]-beta-D-GlcNAc derivative + GDP-beta-L-fucose = an alpha-Neu5Ac-(2-&gt;3)-beta-D-Gal-(1-&gt;4)-[alpha-L-Fuc-(1-&gt;3)]-beta-D-GlcNAc-(1-&gt;3)-beta-D-Gal-(1-&gt;4)-[alpha-L-Fuc-(1-&gt;3)]-beta-D-GlcNAc derivative + GDP + H(+). It carries out the reaction Lc4Cer + GDP-beta-L-fucose = a lactoside III(4)-a-Fuc-Lc4Cer + GDP + H(+). The catalysed reaction is a beta-D-Gal-(1-&gt;3)-beta-D-GlcNAc-(1-&gt;3)-beta-D-Gal-(1-&gt;4)-beta-D-Glc-(1&lt;-&gt;1')-Cer(d18:1(4E)) + GDP-beta-L-fucose = a III(4)-a-Fuc-Lc4Cer(d18:1(4E)) + GDP + H(+). It catalyses the reaction N-acetyl-alpha-neuraminosyl-(2-&gt;3)-beta-D-galactosyl-(1-&gt;3)-[N-acetyl-alpha-neuraminosyl-(2-&gt;6)]-N-acetyl-beta-D-glucosaminyl-(1-&gt;3)-beta-D-galactosyl-(1-&gt;4)-beta-D-glucosyl-(1&lt;-&gt;1')-N-acyl-sphing-4-enine + GDP-beta-L-fucose = N-acetyl-alpha-neuraminosyl-(2-&gt;3)-beta-D-galactosyl-(1-&gt;3)-alpha-L-fucosyl-(1-&gt;4)-[N-acetyl-alpha-neuraminosyl-(2-&gt;6)-N-acetyl-beta-D-glucosaminyl-(1-&gt;3)]-beta-D-galactosyl-(1-&gt;4)-beta-D-glucosyl-(1&lt;-&gt;1')-N-acyl-sphing-4-enine + GDP + H(+). The enzyme catalyses N-acetyl-alpha-neuraminosyl-(2-&gt;3)-beta-D-galactosyl-(1-&gt;3)-N-acetyl-beta-D-glucosaminyl-(1-&gt;3)-beta-D-galactosyl-(1-&gt;4)-beta-D-glucosyl-(1&lt;-&gt;1')-N-acyl-sphing-4-enine + GDP-beta-L-fucose = N-acetyl-alpha-neuraminosyl-(2-&gt;3)-beta-D-galactosyl-(1-&gt;3)-alpha-L-fucosyl-(1-&gt;4)-[N-acetyl-beta-D-glucosaminyl-(1-&gt;3)]-beta-D-galactosyl-(1-&gt;4)-beta-D-glucosyl-(1&lt;-&gt;1')-N-acyl-sphing-4-enine + GDP + H(+). It carries out the reaction beta-D-galactosyl-(1-&gt;3)-N-acetyl-D-glucosamine + GDP-beta-L-fucose = beta-D-galactosyl-(1-&gt;3)-[alpha-L-fucosyl-(1-&gt;4)]-N-acetyl-D-glucosamine + GDP + H(+). The catalysed reaction is alpha-L-Fuc-(1-&gt;2)-beta-D-Gal-(1-&gt;3)-D-GlcNAc + GDP-beta-L-fucose = alpha-L-Fuc-(1-&gt;2)-beta-D-Gal-(1-&gt;3)-[alpha-L-Fuc-(1-&gt;4)]-D-GlcNAc + GDP + H(+). It catalyses the reaction alpha-L-Fuc-(1-&gt;2)-beta-D-Gal-(1-&gt;4)-D-GlcNAc + GDP-beta-L-fucose = alpha-L-Fuc-(1-&gt;2)-beta-D-Gal-(1-&gt;4)-[alpha-L-Fuc-(1-&gt;3)]-D-GlcNAc + GDP + H(+). The enzyme catalyses beta-D-galactosyl-(1-&gt;4)-N-acetyl-D-glucosamine + GDP-beta-L-fucose = beta-D-galactosyl-(1-&gt;4)-[alpha-L-fucosyl-(1-&gt;3)]-N-acetyl-D-glucosamine + GDP + H(+). It carries out the reaction lactose + GDP-beta-L-fucose = beta-D-galactosyl-(1-&gt;4)-[alpha-L-fucosyl-(1-&gt;3)]-D-glucose + GDP + H(+). The catalysed reaction is an alpha-Neu5Ac-(2-&gt;3)-beta-D-Gal-(1-&gt;3)-D-GlcNAc derivative + GDP-beta-L-fucose = an alpha-Neu5Ac-(2-&gt;3)-beta-D-Gal-(1-&gt;3)-[alpha-L-Fuc-(1-&gt;4)]-beta-D-GlcNAc derivative + GDP + H(+). Its pathway is protein modification; protein glycosylation. Its function is as follows. Catalyzes the transfer of L-fucose, from a guanosine diphosphate-beta-L-fucose, to both the subterminal N-acetyl glucosamine (GlcNAc) of type 1 chain (beta-D-Gal-(1-&gt;3)-beta-D-GlcNAc) glycolipids and oligosaccharides via an alpha(1,4) linkage, and the subterminal glucose (Glc) or GlcNAc of type 2 chain (beta-D-Gal-(1-&gt;4)-beta-D-GlcNAc) oligosaccharides via an alpha(1,3) linkage, independently of the presence of terminal alpha-L-fucosyl-(1,2) moieties on the terminal galactose of these acceptors and participates in the blood groups Lewis determination and expression of Lewis a (Le(a)), lewis b (Le(b)), Lewis x/SSEA-1 (Le(x)) and lewis y (Le(y)) antigens. Also catalyzes the transfer of L-fucose to subterminal GlcNAc of sialyl- and disialyl-lactotetraosylceramide to produce sialyl Lewis a (sLe(a)) and disialyl Lewis a via an alpha(1,4) linkage and therefore may regulate cell surface sialyl Lewis a expression and consequently regulates adhesive properties to E-selectin, cell proliferation and migration. Catalyzes the transfer of an L-fucose to 3'-sialyl-N-acetyllactosamine by an alpha(1,3) linkage, which allows the formation of sialyl-Lewis x structure and therefore may regulate the sialyl-Lewis x surface antigen expression and consequently adhesive properties to E-selectin. Prefers type 1 chain over type 2 acceptors. Type 1 tetrasaccharide is a better acceptor than type 1 disaccharide suggesting that a beta anomeric configuration of GlcNAc in the substrate is preferred. Lewis-positive (Le(+)) individuals have an active enzyme while Lewis-negative (Le(-)) individuals have an inactive enzyme. The polypeptide is 3-galactosyl-N-acetylglucosaminide 4-alpha-L-fucosyltransferase FUT3 (Bos taurus (Bovine)).